We begin with the raw amino-acid sequence, 303 residues long: Sulfotransferase 6B1 (303 aa).

Residue 65 to 70 participates in 3'-phosphoadenylyl sulfate binding; the sequence is KCGSNW. Catalysis depends on His118, which acts as the Proton acceptor. 3'-phosphoadenylyl sulfate-binding positions include Arg140, Ser148, Tyr203, 237-242, and 259-261; these read STFQAM and RKG.

This sequence belongs to the sulfotransferase 1 family. In terms of tissue distribution, specifically expressed in kidney and testis.

The protein localises to the cytoplasm. It localises to the cytosol. The enzyme catalyses thyroxine + 3'-phosphoadenylyl sulfate = thyroxine sulfate + adenosine 3',5'-bisphosphate + H(+). Functionally, sulfotransferase that utilizes 3'-phospho-5'-adenylyl sulfate (PAPS) as sulfonate donor to catalyze the sulfate conjugation of thyroxine. Involved in the metabolism of thyroxine. This is Sulfotransferase 6B1 (SULT6B1) from Homo sapiens (Human).